We begin with the raw amino-acid sequence, 1032 residues long: MTNPEQLKRILSHEVLLKIEMSKNGIVEYANPAFFELIGYEGDLFQCSFYEYLQSDDEHLMKKATDNLFRKSISVAHVFAFLRCNPIRSPNYYIQQAKAPFEGKTYIRMLFRGILVDSLYGKDTRVLWAGKYLYPQRSVINEMDFILFNTLGIGAFILHDHLLGIIKYNYIHVPPPSGKLCSLCEDNLPEWYFEVHSDFCLVWNDLVRRVFAVQQLINCKKLEIEDIVNKLPTGSNHMVEETFLSLPVITVFNGKKNRKQRFRIRSWRSSLNFLVKELDKSIKNFAYLEHRTFLTISNSAAKDMKREIYEKSLVNWEYDFLVPSKIQDYFYDVHSLLLKNLSSKIKLCNHILMYQATFNEVKNFLQTYSLNMLSIEMENIEGSLYFGNAQLSNLICVNQYLSEQRPVFFNRLLALGNVENNNSIYDDIQKRTERISTIKRHKKYFEIGERLTEKDLIVSKTFKTTRIDYFKAVKGSIEDLDVRPLKNRQKFVNKFYASIVHFLTESMQFPSHNDRRFGDNTPHSLDEFILLKEINRGAYGRVYLAKKRSSGKYFALKMIPKSSLDSLKKIKGLLLEKRNMHIQRYGPNTVKLYYAFDSGDYLCLVMDYFNGGDCETLIQKLGPLPEQWVCQYAAELLNAIELLHQDGIIHHDIKPANMLVDETGHIRLTDFGLSENVEEKKEVYKLTKRMSFEQKHGNLYEQLQPKKFEFVRYVRNYRGNIDELEKAESPQQNSDYANDSVQHLLDFDINNMDETAIHMLMNQLEKKENRTFIKKDISGTPNYMAPEILMGVDTQMGDIWAMGCVIFEMLTGTRPFEANTVKAIWARIERNDIGWTKRVKESCSKEAVDLITKLMDPDCNKRLGSNGYQEIKKHPFFRTIKWDNLNSGPGPFVPQTENVEDLTYFEKNISGSDNINKNNCQTSATLILNGIFAFHPPPKATPADSGTETSNSAAFSASEEETTNLTDQKRKDLFSLITKAFKGIDLKALNYNNKATLLRMYDEVDFPKNQQRNKEKFRIQKRPNKKYRYHLF.

Residues 3-72 (NPEQLKRILS…KATDNLFRKS (70 aa)) enclose the PAS domain. A Protein kinase domain is found at 528–877 (FILLKEINRG…YQEIKKHPFF (350 aa)). ATP-binding positions include 534–542 (INRGAYGRV) and lysine 557. The active-site Proton acceptor is the aspartate 652. Residues 938-963 (PKATPADSGTETSNSAAFSASEEETT) are disordered. The span at 947–957 (TETSNSAAFSA) shows a compositional bias: low complexity.

Belongs to the protein kinase superfamily. Ser/Thr protein kinase family.

Its subcellular location is the cytoplasm. The catalysed reaction is L-seryl-[protein] + ATP = O-phospho-L-seryl-[protein] + ADP + H(+). The enzyme catalyses L-threonyl-[protein] + ATP = O-phospho-L-threonyl-[protein] + ADP + H(+). Has a role in meiosis. The polypeptide is Serine/threonine-protein kinase ppk31 (ppk31) (Schizosaccharomyces pombe (strain 972 / ATCC 24843) (Fission yeast)).